The chain runs to 721 residues: Exo beta-1,2-glucooligosaccharide sophorohydrolase (non-reducing end) (721 aa).

Residues 1-18 form the signal peptide; it reads MKHIALLTTLLLSASLQA. Positions 474 to 708 constitute a Glycoamylase-like domain; the sequence is NHKLIGWNET…LLWNLFMSHP (235 aa).

Monomer.

The protein localises to the periplasm. It catalyses the reaction [(1-&gt;2)-beta-D-glucosyl](n) + H2O = [(1-&gt;2)-beta-D-glucosyl](n-2) + sophorose. Functionally, catalyzes the hydrolysis of linear beta-1,2-glucan and beta-1,2-glucooligosaccharides with degrees of polymerization (DPs) greater than or equal to 4, to produce sophorose. The best substrates are tetra- and pentasaccharides. Acts as an exo-type enzyme that releases sophorose from the non-reducing end of the substrate. It cannot hydrolyze cyclic beta-1,2-glucans. This Parabacteroides distasonis (strain ATCC 8503 / DSM 20701 / CIP 104284 / JCM 5825 / NCTC 11152) protein is Exo beta-1,2-glucooligosaccharide sophorohydrolase (non-reducing end).